We begin with the raw amino-acid sequence, 238 residues long: 2,3-bisphosphoglycerate-dependent phosphoglycerate mutase (238 aa).

Residues 8–15 (RHGQSEWN), 21–22 (TG), Arg60, 86–89 (ERHY), Lys97, 113–114 (RR), and 182–183 (GN) contribute to the substrate site. Catalysis depends on His9, which acts as the Tele-phosphohistidine intermediate. Glu86 acts as the Proton donor/acceptor in catalysis.

This sequence belongs to the phosphoglycerate mutase family. BPG-dependent PGAM subfamily. In terms of assembly, homodimer.

It catalyses the reaction (2R)-2-phosphoglycerate = (2R)-3-phosphoglycerate. It participates in carbohydrate degradation; glycolysis; pyruvate from D-glyceraldehyde 3-phosphate: step 3/5. Its function is as follows. Catalyzes the interconversion of 2-phosphoglycerate and 3-phosphoglycerate. This chain is 2,3-bisphosphoglycerate-dependent phosphoglycerate mutase, found in Pelagibacter ubique (strain HTCC1062).